We begin with the raw amino-acid sequence, 250 residues long: MLFLHDVWVNWFEGEENGYNVCHFHEWRKEDSVELLDQVPLLRVSSVLFHYIENDLSELPAELLNEVHQKAYIRKNHERTQLDHCFVVTDGIGILAVDTAGYTIPVRKSRLIPRQEQLVYEMVKDVEAETYEFAPEKLQSSKEYHILSLSPEHVRGLTRKERQLKQLLFMALDQLKGLQNRAEIAYWYTEWNPYMYEQIKRMTFEEIWDMLFNETIDGWSDKHRDFCENLIKGQPFFEKLWEIENESKVN.

This sequence belongs to the UPF0736 family.

This is UPF0736 protein BLi01230/BL03322 from Bacillus licheniformis (strain ATCC 14580 / DSM 13 / JCM 2505 / CCUG 7422 / NBRC 12200 / NCIMB 9375 / NCTC 10341 / NRRL NRS-1264 / Gibson 46).